We begin with the raw amino-acid sequence, 194 residues long: uncharacterized protein (194 aa).

This is an uncharacterized protein from Methanocaldococcus jannaschii (strain ATCC 43067 / DSM 2661 / JAL-1 / JCM 10045 / NBRC 100440) (Methanococcus jannaschii).